A 452-amino-acid polypeptide reads, in one-letter code: La-related protein 1B (452 aa).

Low complexity predominate over residues 1 to 22 (MATTASSAANSASRFSIDSSIS). Residues 1-251 (MATTASSAAN…GFSHRNYSGR (251 aa)) form a disordered region. Alanine 2 is modified (N-acetylalanine). A compositionally biased stretch (polar residues) spans 44–68 (LSLSQDDPFSAPSVSPPTGNNSSDY). Composition is skewed to low complexity over residues 99–117 (SWPALSLSARSSSIKSPSL), 136–163 (ATSNTSTNANAGSSVSATSSENSAVNNS), 171–185 (NNNTSSSSTSSNVSN), and 206–223 (SGNFRNSQRNRNSSSYPR). Positions 225-236 (EGLHHGNRRNYE) are enriched in basic and acidic residues. Residues 237 to 247 (HGNQSGFSHRN) show a composition bias toward polar residues. Positions 328-417 (RNFDAILYNK…RGDWDKYLLP (90 aa)) constitute an HTH La-type RNA-binding domain. The segment at 419–452 (EPSRSGPAAGASNNASLVSQIESMTLSERSREGV) is disordered. Residues 422-434 (RSGPAAGASNNAS) show a composition bias toward low complexity. The span at 435–445 (LVSQIESMTLS) shows a compositional bias: polar residues.

This sequence belongs to the LARP family.

It is found in the cytoplasm. In terms of biological role, promotes leaf senescence. The sequence is that of La-related protein 1B (LARP1B) from Arabidopsis thaliana (Mouse-ear cress).